A 448-amino-acid chain; its full sequence is tRNA methyltransferase 10 homolog C (448 aa).

Residues 1–48 constitute a mitochondrion transit peptide; sequence MAFVNTLLRTIRCSAVHTLVQEGRSLSLLKASHQLTQSRKIMLSNHVR. A coiled-coil region spans residues 137-165; the sequence is REVMKTNRKEKKKELKESKSKIESLDQLE. The segment at 144 to 167 is disordered; it reads RKEKKKELKESKSKIESLDQLETK. In terms of domain architecture, SAM-dependent MTase TRM10-type spans 190–382; sequence QRWKCVQAMK…SFVPNRKHDG (193 aa). Residues 429–448 form a disordered region; it reads ERTDDTSIRSTRKRWWEEEN.

This sequence belongs to the class IV-like SAM-binding methyltransferase superfamily. TRM10 family. As to quaternary structure, component of mitochondrial ribonuclease P. Interacts with HSD17B10/MRPP2.

The protein resides in the mitochondrion matrix. It is found in the mitochondrion nucleoid. The enzyme catalyses adenosine(9) in tRNA + S-adenosyl-L-methionine = N(1)-methyladenosine(9) in tRNA + S-adenosyl-L-homocysteine + H(+). It carries out the reaction guanosine(9) in tRNA + S-adenosyl-L-methionine = N(1)-methylguanosine(9) in tRNA + S-adenosyl-L-homocysteine + H(+). The catalysed reaction is an adenosine in mRNA + S-adenosyl-L-methionine = an N(1)-methyladenosine in mRNA + S-adenosyl-L-homocysteine + H(+). Mitochondrial tRNA N(1)-methyltransferase involved in mitochondrial tRNA maturation. Component of mitochondrial ribonuclease P, which cleaves tRNA molecules in their 5'-ends. Together with hsd17b10/mrpp2, forms a subcomplex of the mitochondrial ribonuclease P, named MRPP1-MRPP2 subcomplex, which displays functions that are independent of the ribonuclease P activity. The MRPP1-MRPP2 subcomplex catalyzes the formation of N(1)-methylguanine and N(1)-methyladenine at position 9 (m1G9 and m1A9, respectively) in tRNAs; trmt10c/mrpp1 acting as the catalytic N(1)-methyltransferase subunit. The MRPP1-MRPP2 subcomplex also acts as a tRNA maturation platform: following 5'-end cleavage by the mitochondrial ribonuclease P complex, the MRPP1-MRPP2 subcomplex enhances the efficiency of 3'-processing catalyzed by ELAC2, retains the tRNA product after elac2 processing and presents the nascent tRNA to the mitochondrial CCA tRNA nucleotidyltransferase TRNT1 enzyme. In addition to tRNA N(1)-methyltransferase activity, trmt10c/mrpp1 also acts as a mRNA N(1)-methyltransferase by mediating methylation of adenosine residues at the N(1) position of MT-ND5 mRNA. This Xenopus tropicalis (Western clawed frog) protein is tRNA methyltransferase 10 homolog C.